The primary structure comprises 90 residues: Bombyxin B-12 (90 aa).

The signal sequence occupies residues 1–20; sequence MMKTTIMFMLVVVISLTYSS. 3 disulfides stabilise this stretch: Cys30-Cys76, Cys42-Cys89, and Cys75-Cys80. A propeptide spans 49 to 67 (c peptide like); it reads SGAQYAPYFWTRQYLGSRG.

Belongs to the insulin family. Heterodimer of a B chain and an A chain linked by two disulfide bonds.

It localises to the secreted. In terms of biological role, brain peptide responsible for activation of prothoracic glands to produce ecdysone in insects. In Bombyx mori (Silk moth), this protein is Bombyxin B-12 (BBXB12).